The primary structure comprises 102 residues: UPF0213 protein in potE 3'region (102 aa).

The GIY-YIG domain maps to 6–81; that stretch reads SPWHLYMLRL…KQLSKTQKER (76 aa).

Belongs to the UPF0213 family.

This chain is UPF0213 protein in potE 3'region, found in Serratia liquefaciens.